A 137-amino-acid chain; its full sequence is Large ribosomal subunit protein uL16 (137 aa).

This sequence belongs to the universal ribosomal protein uL16 family. Part of the 50S ribosomal subunit.

Binds 23S rRNA and is also seen to make contacts with the A and possibly P site tRNAs. The sequence is that of Large ribosomal subunit protein uL16 from Rhodopseudomonas palustris (strain HaA2).